The sequence spans 1370 residues: Putative Polycomb group protein ASXL2 (1370 aa).

Residues 11 to 86 (RTWAEAAKTV…RMGVYTLKKD (76 aa)) enclose the HTH HARE-type domain. The disordered stretch occupies residues 92-216 (KELSECSEES…DSVPAKPGQM (125 aa)). Low complexity predominate over residues 103-120 (DGQSDSHSSDNSSSSDGG). The segment covering 141–152 (PPSPPSGCPSPT) has biased composition (pro residues). Phosphoserine is present on Ser-150. The short motif at 178–182 (QQKKK) is the Nuclear localization signal element. The span at 186 to 198 (CRPSMSISNQHLS) shows a compositional bias: polar residues. Positions 229 to 338 (PDSILVNTNL…FENYYGQSSG (110 aa)) constitute a DEUBAD domain. The LXXLL motif motif lies at 258 to 262 (LLLLL). 2 disordered regions span residues 340–487 (SLED…AGLQ) and 516–535 (QESL…SSWE). Positions 398–412 (QKEENQDEARPDSKS) are enriched in basic and acidic residues. Phosphoserine occurs at positions 477, 524, 553, and 590. Arg-594 is modified (asymmetric dimethylarginine). Ser-601 is modified (phosphoserine). Gly residues predominate over residues 643–652 (IPGPGPGGGQ). Disordered stretches follow at residues 643 to 734 (IPGP…LASS), 805 to 891 (PKAG…SSIP), and 1103 to 1175 (GHAD…VSEQ). Polar residues-rich tracts occupy residues 719–734 (AQLQ…LASS) and 830–839 (MTSSPVTTAS). Residues 849–870 (SGTATSTGSAPSSSTLPAASSL) are compositionally biased toward low complexity. Positions 871–891 (KTPGTSANMNGPISRTSSSIP) are enriched in polar residues. The span at 1119–1131 (DESDEDRVGDEQE) shows a compositional bias: acidic residues. 2 positions are modified to phosphoserine: Ser-1121 and Ser-1254. Residues 1332–1369 (PSKCYCRLKAMIMCKGCGAFCHDDCIGPSKLCVSCLVV) form a PHD-type; atypical zinc finger.

The protein belongs to the Asx family. Core component of the polycomb repressive deubiquitinase (PR-DUB) complex, at least composed of BAP1, one of ASXL1, ASXL2 or (probably) ASXL3, and one of MBD5 or MBD6. Distinct combinations of ASXL and MBD proteins may preferentially bind specific histone modification marks. The PR-DUB core associates with a number of accessory proteins, including FOXK1, FOXK2, KDM1B, HCFC1 and OGT; KDM1B specifically associates with ASXL2 PR-DUB complexes. Interacts (via PHD domain) with MBD5 and MBD6 (via MBD domain); the interaction is probably direct and mediates association of MBD proteins with the PR-DUB core. Interacts with PPARA and PPARG.

It is found in the nucleus. In terms of biological role, putative Polycomb group (PcG) protein. PcG proteins act by forming multiprotein complexes, which are required to maintain the transcriptionally repressive state of homeotic genes throughout development. PcG proteins are not required to initiate repression, but to maintain it during later stages of development. They probably act via methylation of histones, rendering chromatin heritably changed in its expressibility. Involved in transcriptional regulation mediated by ligand-bound nuclear hormone receptors, such as peroxisome proliferator-activated receptor gamma (PPARG). Acts as a coactivator for PPARG and enhances its adipocyte differentiation-inducing activity; the function seems to involve differential recruitment of acetylated and methylated histone H3. Non-catalytic component of the PR-DUB complex, a complex that specifically mediates deubiquitination of histone H2A monoubiquitinated at 'Lys-119' (H2AK119ub1). The PR-DUB complex is an epigenetic regulator of gene expression and acts as a transcriptional coactivator, affecting genes involved in development, cell communication, signaling, cell proliferation and cell viability. ASXL1, ASXL2 and ASXL3 function redundantly in the PR-DUB complex. The ASXL proteins are essential for chromatin recruitment and transcriptional activation of associated genes. ASXL1 and ASXL2 are important for BAP1 protein stability. The sequence is that of Putative Polycomb group protein ASXL2 (Asxl2) from Mus musculus (Mouse).